Consider the following 282-residue polypeptide: MSGADRSPNAGAAPDSAPGQAAVASAYQRFEPRAYLRNNYAPPRGDLCNPNGVGPWKLRCLAQTFATGEVSGRTLIDIGSGPTVYQLLSACSHFEDITMTDFLEVNRQELGRWLQEEPGAFNWSMYSQHACLIEGKGECWQDKERQLRARVKRVLPIDVHQPQPLGAGSPAPLPADALVSAFCLEAVSPDLASFQRALDHITTLLRPGGHLLLIGALEESWYLAGEARLTVVPVSEEEVREALVRSGYKVRDLRTYIMPAHLQTGVDDVKGVFFAWAQKVGL.

Ser-7 is subject to Phosphoserine. S-adenosyl-L-methionine-binding positions include Tyr-35, Tyr-40, 79–80, Tyr-85, Asp-101, Asn-106, 158–159, and Ala-181; these read GS and DV. Octopamine contacts are provided by Glu-219 and Asp-267.

It catalyses the reaction phenylethanolamine + S-adenosyl-L-methionine = N-methylphenylethanolamine + S-adenosyl-L-homocysteine + H(+). The enzyme catalyses (R)-noradrenaline + S-adenosyl-L-methionine = (R)-adrenaline + S-adenosyl-L-homocysteine + H(+). It carries out the reaction (R)-normetanephrine + S-adenosyl-L-methionine = (R)-metanephrine + S-adenosyl-L-homocysteine + H(+). The catalysed reaction is (R)-octopamine + S-adenosyl-L-methionine = (R)-synephrine + S-adenosyl-L-homocysteine + H(+). Its pathway is catecholamine biosynthesis; (R)-adrenaline biosynthesis; (R)-adrenaline from (R)-noradrenaline: step 1/1. With respect to regulation, inhibited by methyl methanethiosulfonate, phenylglyoxal, tetranitromethane and diethyl pyrocarbonate. Inhibited by 4-oxo-1,4-dihydro-quinoline-3,7-dicarboxylic acid, 4-(benzo[d][1,3]dioxol-5-ylamino)-4-oxobutanoic acid and 1,4-diaminonaphthalene-2,6-disulfonic acid. Functionally, catalyzes the transmethylation of nonepinephrine (noradrenaline) to form epinephrine (adrenaline), using S-adenosyl-L-methionine as the methyl donor. Other substrates include phenylethanolamine and octopamine. Also methylates normetanephrine. The chain is Phenylethanolamine N-methyltransferase (PNMT) from Homo sapiens (Human).